The primary structure comprises 227 residues: MESFETLEKLLSYSFKNKELLIEALSHPSLRQHHEYKDDKDYERLEFLGDAVLNLVITEILFRNFANYNEGHLAKIRSYLVCKETICMVGAKLTLKNYIIMTHGEEVAGGRDNLNNIENATEALIAAIYLDSNIETTYDIIEKLWAEFIKVQNLTDYDPKTALQEWAQASDHHLPIYRLIKREGASHSSTFTVLVKVKDYEQTGTGHAIKEAEKNAARSLLHRLKND.

Positions 4–133 (FETLEKLLSY…LIAAIYLDSN (130 aa)) constitute an RNase III domain. A Mg(2+)-binding site is contributed by Glu-46. The active site involves Asp-50. Mg(2+) is bound by residues Asn-119 and Glu-122. Glu-122 is a catalytic residue. Residues 158–226 (DPKTALQEWA…ARSLLHRLKN (69 aa)) form the DRBM domain.

The protein belongs to the ribonuclease III family. As to quaternary structure, homodimer. Requires Mg(2+) as cofactor.

It is found in the cytoplasm. It catalyses the reaction Endonucleolytic cleavage to 5'-phosphomonoester.. In terms of biological role, digests double-stranded RNA. Involved in the processing of primary rRNA transcript to yield the immediate precursors to the large and small rRNAs (23S and 16S). Processes some mRNAs, and tRNAs when they are encoded in the rRNA operon. Processes pre-crRNA and tracrRNA of type II CRISPR loci if present in the organism. This Rickettsia massiliae (strain Mtu5) protein is Ribonuclease 3.